Here is a 786-residue protein sequence, read N- to C-terminus: Cadherin-9 (786 aa).

Residues 1-21 (MRTYSCLQLVIWTCIFHMVDN) form the signal peptide. A glycan (N-linked (GlcNAc...) asparagine) is linked at asparagine 21. A propeptide spanning residues 22-52 (STLQGKDSSHFLRRIVNLKKDEGKMLHRAKR) is cleaved from the precursor. Topologically, residues 22–614 (STLQGKDSSH…MLAAGLSTGA (593 aa)) are extracellular. Cadherin domains follow at residues 54-158 (WMWN…EPKF), 159-267 (TKDL…PPRF), 268-382 (PQST…PPVF), 383-487 (SKLS…APEF), and 487-604 (FATY…AEAL). Residue asparagine 254 is glycosylated (N-linked (GlcNAc...) asparagine). 2 N-linked (GlcNAc...) asparagine glycosylation sites follow: asparagine 454 and asparagine 535. Residues 615–635 (LIAILLCVVILLTLIVLFAAL) form a helical membrane-spanning segment. At 636–786 (KRQRKKEPLI…AEMYGGNDSD (151 aa)) the chain is on the cytoplasmic side. Phosphoserine is present on serine 785.

It is found in the cell membrane. In terms of biological role, cadherins are calcium-dependent cell adhesion proteins. They preferentially interact with themselves in a homophilic manner in connecting cells; cadherins may thus contribute to the sorting of heterogeneous cell types. The sequence is that of Cadherin-9 (Cdh9) from Mus musculus (Mouse).